We begin with the raw amino-acid sequence, 247 residues long: tRNA (guanine-N(1)-)-methyltransferase (247 aa).

S-adenosyl-L-methionine-binding positions include glycine 112 and 131 to 136 (LGDFVL).

The protein belongs to the RNA methyltransferase TrmD family. In terms of assembly, homodimer.

It is found in the cytoplasm. The catalysed reaction is guanosine(37) in tRNA + S-adenosyl-L-methionine = N(1)-methylguanosine(37) in tRNA + S-adenosyl-L-homocysteine + H(+). Its function is as follows. Specifically methylates guanosine-37 in various tRNAs. This Syntrophotalea carbinolica (strain DSM 2380 / NBRC 103641 / GraBd1) (Pelobacter carbinolicus) protein is tRNA (guanine-N(1)-)-methyltransferase.